A 94-amino-acid chain; its full sequence is Mitochondrial import receptor subunit TOM9-1 (94 aa).

The Cytoplasmic portion of the chain corresponds to 1 to 48 (MAPKKIGAGKGDSSILAKISNYDIVSQGRRAACDAVYVSKKLLKSTGK). Residues 49-66 (AAWIAGTTFLILAVPLIL) form a helical membrane-spanning segment. At 67-94 (ELEQDHRLGEIDFEQASLLGTPPVGAML) the chain is on the mitochondrial intermembrane side.

The protein belongs to the Tom22 family. In terms of assembly, forms part of the preprotein translocase complex of the outer mitochondrial membrane (TOM complex) which consists of at least 6 different proteins (TOM5, TOM6, TOM7, TOM20, TOM22/TOM9 and TOM40). As to expression, expressed in roots, flowers, young cotyledons and leaves.

It localises to the mitochondrion outer membrane. Central component of the receptor complex responsible for the recognition and translocation of cytosolically synthesized mitochondrial preproteins. Together with TOM20 functions as the transit peptide receptor at the surface of the mitochondrion outer membrane and facilitates the movement of preproteins into the translocation pore. This is Mitochondrial import receptor subunit TOM9-1 (TOM9-1) from Arabidopsis thaliana (Mouse-ear cress).